A 412-amino-acid chain; its full sequence is Gamma-glutamyl phosphate reductase (412 aa).

This sequence belongs to the gamma-glutamyl phosphate reductase family.

The protein resides in the cytoplasm. The catalysed reaction is L-glutamate 5-semialdehyde + phosphate + NADP(+) = L-glutamyl 5-phosphate + NADPH + H(+). Its pathway is amino-acid biosynthesis; L-proline biosynthesis; L-glutamate 5-semialdehyde from L-glutamate: step 2/2. Catalyzes the NADPH-dependent reduction of L-glutamate 5-phosphate into L-glutamate 5-semialdehyde and phosphate. The product spontaneously undergoes cyclization to form 1-pyrroline-5-carboxylate. The sequence is that of Gamma-glutamyl phosphate reductase from Bartonella henselae (strain ATCC 49882 / DSM 28221 / CCUG 30454 / Houston 1) (Rochalimaea henselae).